A 705-amino-acid polypeptide reads, in one-letter code: Ovotransferrin (705 aa).

The signal sequence occupies residues 1-19; it reads MKLILCTVLSLGIAAVCFA. 2 consecutive Transferrin-like domains span residues 26–352 and 364–689; these read IRWC…SMRK and IQWC…SLKT. 2 disulfides stabilise this stretch: Cys29-Cys64 and Cys39-Cys55. Asp79 and Tyr111 together coordinate Fe(3+). 4 disulfides stabilise this stretch: Cys134/Cys216, Cys179/Cys193, Cys190/Cys201, and Cys247/Cys261. Hydrogencarbonate contacts are provided by Thr136, Arg140, Ala142, and Gly143. Residue Tyr210 coordinates Fe(3+). Residue His269 coordinates Fe(3+). The connecting region stretch occupies residues 352–360; that stretch reads KDQLTPSPR. Cystine bridges form between Cys367/Cys399 and Cys377/Cys390. Asp414 and Tyr450 together coordinate Fe(3+). 7 cysteine pairs are disulfide-bonded: Cys424-Cys699, Cys440-Cys662, Cys473-Cys549, Cys497-Cys690, Cys507-Cys521, Cys518-Cys532, and Cys589-Cys603. Residues Thr475, Arg479, Ala481, and Gly482 each contribute to the hydrogencarbonate site. An N-linked (GlcNAc...) asparagine glycan is attached at Asn492. Tyr543 contacts Fe(3+). Residue His611 coordinates Fe(3+).

This sequence belongs to the transferrin family. In terms of assembly, monomer. Different forms of hen transferrin are distinguished by their carbohydrate composition. Ovotransferrin and embryo serum transferrin but not adult serum transferrin, have bisecting N-acetylglucosamine. Transferrin secreted by embryo hepatocytes in primary culture is marked by the presence of (alpha1-6) fucosylation of the core N-acetylglucosamine. Serum transferrins also differ in the number of attached neuraminic acid residues. In both embryo forms, sialylation occurs on the Man (alpha 1-3)-linked antennae. In terms of tissue distribution, expressed in the magnum of the oviduct (at protein level).

The protein localises to the secreted. Functionally, transferrins are iron binding transport proteins which can bind two Fe(3+) ions in association with the binding of an anion, usually bicarbonate. Responsible for the transport of iron from sites of absorption and heme degradation to those of storage and utilization. There are two forms of hen transferrin, ovotransferrin, found in the ovoducts and, serum transferrin, secreted by the liver. Serum transferrin may also have a role in stimulating cell proliferation and is regulated by iron levels. Ovotransferrin has a bacteriostatic function and, is not controlled by iron levels. In Gallus gallus (Chicken), this protein is Ovotransferrin.